Reading from the N-terminus, the 439-residue chain is MSQTHLSNQKFADLPLHPEVKQALAENGFEFCTPIQALSLPVLLQSKDIAGQAQTGTGKTMAFLVATFNHLLSSSIPEGRQLNQPRAIIMAPTRELAIQIAKDAILLAKHTRLKVGIVYGGESYDVQRKVLDQGVDILIGTTGRIIDYVRQGIINLNAIQAVVLDEADRMFDLGFIKDIRFLFRRMPNADQRLNMLFSATLSMKVQELAYDHMNDPVKVEIAPEEKTSKNIKEEIFYPSQEDKMRLLLTLIEEDWPEKAIVFSNTKHSCENLWSWLEGDGHRVGLLTGDVPQKKRIRILEQFTQGQLDILVATDVAARGLHISDVSHVYNYDLPDDCEDYVHRIGRTGRAGNKGVSVSFACEEYALNLPAIETYINHSIPVSNYDRDALLDDIPSPVKIHRKHPAGARNLRERSGAGRTPGAHRSGGRPPRHDRTRRQP.

Positions 9–37 match the Q motif motif; sequence QKFADLPLHPEVKQALAENGFEFCTPIQA. The Helicase ATP-binding domain maps to 40 to 219; the sequence is LPVLLQSKDI…YDHMNDPVKV (180 aa). 53 to 60 serves as a coordination point for ATP; it reads AQTGTGKT. Positions 165–168 match the DEAD box motif; that stretch reads DEAD. The region spanning 243 to 390 is the Helicase C-terminal domain; sequence KMRLLLTLIE…VSNYDRDALL (148 aa). Positions 395-439 are disordered; that stretch reads SPVKIHRKHPAGARNLRERSGAGRTPGAHRSGGRPPRHDRTRRQP. The segment covering 425 to 439 has biased composition (basic residues); it reads SGGRPPRHDRTRRQP.

It belongs to the DEAD box helicase family. RhlB subfamily. In terms of assembly, component of the RNA degradosome, which is a multiprotein complex involved in RNA processing and mRNA degradation.

The protein localises to the cytoplasm. It carries out the reaction ATP + H2O = ADP + phosphate + H(+). In terms of biological role, DEAD-box RNA helicase involved in RNA degradation. Has RNA-dependent ATPase activity and unwinds double-stranded RNA. In Shewanella oneidensis (strain ATCC 700550 / JCM 31522 / CIP 106686 / LMG 19005 / NCIMB 14063 / MR-1), this protein is ATP-dependent RNA helicase RhlB.